The sequence spans 857 residues: DNA mismatch repair protein MutS (857 aa).

Residue 608–615 (GPNMSGKS) participates in ATP binding.

It belongs to the DNA mismatch repair MutS family.

This protein is involved in the repair of mismatches in DNA. It is possible that it carries out the mismatch recognition step. This protein has a weak ATPase activity. The chain is DNA mismatch repair protein MutS from Lacticaseibacillus paracasei (strain ATCC 334 / BCRC 17002 / CCUG 31169 / CIP 107868 / KCTC 3260 / NRRL B-441) (Lactobacillus paracasei).